The sequence spans 318 residues: MYFINILTLLIPILIAMAFLTLVERKILGYMQLRKGPNIVGPYGILQPFADAMKLFMKEPMRPLTTSMSLFIIAPTLSLTLALSLWIPLPMPHPLINLNLGMLFILATSSLSVYSILWSGWASNSKYSLFGALRAVAQTISYEVTMAIILLSVLLMSGSFSLQMLITTQEHIWLLIPAWPMAMMWYISTLAETNRAPFDLTEGESELVSGFNVEYAAGPFALFFMAEYTNIILMNALTSIVFLGPLYHINYPELYSTSFMTETLLLSTTFLWIRASYPRFRYDQLMHLLWKNFLPLTLAFCMWYISLPIFLAGIPPYT.

The next 8 helical transmembrane spans lie at 3-23 (FINI…LTLV), 70-90 (LFII…IPLP), 100-120 (LGML…LWSG), 146-166 (MAII…QMLI), 171-191 (HIWL…STLA), 231-251 (IILM…HINY), 254-273 (LYST…FLWI), and 294-314 (LPLT…LAGI).

Belongs to the complex I subunit 1 family. In terms of assembly, core subunit of respiratory chain NADH dehydrogenase (Complex I) which is composed of 45 different subunits.

It localises to the mitochondrion inner membrane. The catalysed reaction is a ubiquinone + NADH + 5 H(+)(in) = a ubiquinol + NAD(+) + 4 H(+)(out). Functionally, core subunit of the mitochondrial membrane respiratory chain NADH dehydrogenase (Complex I) which catalyzes electron transfer from NADH through the respiratory chain, using ubiquinone as an electron acceptor. Essential for the catalytic activity and assembly of complex I. The chain is NADH-ubiquinone oxidoreductase chain 1 from Rattus norvegicus (Rat).